Here is a 394-residue protein sequence, read N- to C-terminus: MSKEKFERTKPHVNVGTIGHVDHGKTTLTAAITTVLAKTYGGAARAFDQIDNAPEEKARGITINTSHVEYDTPTRHYAHVDCPGHADYVKNMITGAAQMDGAILVVAATDGPMPQTREHILLGRQVGVPYIIVFLNKCDMVDDEELLELVEMEVRELLSQYDFPGDDTPIVRGSALKALEGDAEWEAKILELAGFLDSYIPEPERAIDKPFLLPIEDVFSISGRGTVVTGRVERGIIKVGEEVEIVGIKETQKSTCTGVEMFRKLLDEGRAGENVGVLLRGIKREEIERGQVLAKPGTIKPHTKFESEVYILSKDEGGRHTPFFKGYRPQFYFRTTDVTGTIELPEGVQMVMPGDNIKMVVTLIHPIAMDDGLRFAIREGGRTVGAGVVAKVLG.

In terms of domain architecture, tr-type G spans 10–204 (KPHVNVGTIG…FLDSYIPEPE (195 aa)). Positions 19-26 (GHVDHGKT) are G1. GTP is bound at residue 19-26 (GHVDHGKT). T26 lines the Mg(2+) pocket. A G2 region spans residues 60 to 64 (GITIN). The interval 81–84 (DCPG) is G3. GTP contacts are provided by residues 81-85 (DCPGH) and 136-139 (NKCD). Positions 136-139 (NKCD) are G4. The interval 174 to 176 (SAL) is G5.

The protein belongs to the TRAFAC class translation factor GTPase superfamily. Classic translation factor GTPase family. EF-Tu/EF-1A subfamily. Monomer.

It localises to the cytoplasm. It catalyses the reaction GTP + H2O = GDP + phosphate + H(+). GTP hydrolase that promotes the GTP-dependent binding of aminoacyl-tRNA to the A-site of ribosomes during protein biosynthesis. This Shigella flexneri serotype 5b (strain 8401) protein is Elongation factor Tu 1.